Here is a 305-residue protein sequence, read N- to C-terminus: Glycine--tRNA ligase alpha subunit (305 aa).

It belongs to the class-II aminoacyl-tRNA synthetase family. Tetramer of two alpha and two beta subunits.

The protein resides in the cytoplasm. It catalyses the reaction tRNA(Gly) + glycine + ATP = glycyl-tRNA(Gly) + AMP + diphosphate. This is Glycine--tRNA ligase alpha subunit (glyQ) from Vibrio cholerae serotype O1 (strain ATCC 39315 / El Tor Inaba N16961).